Here is a 412-residue protein sequence, read N- to C-terminus: FAD-dependent monooxygenase nscC (412 aa).

The first 21 residues, methionine 1–serine 21, serve as a signal peptide directing secretion. The FAD site is built by glutamate 35 and alanine 46. 2 N-linked (GlcNAc...) asparagine glycosylation sites follow: asparagine 68 and asparagine 92. FAD is bound at residue arginine 119. Residues asparagine 170, asparagine 231, and asparagine 251 are each glycosylated (N-linked (GlcNAc...) asparagine). Aspartate 326 and glycine 339 together coordinate FAD.

The protein belongs to the paxM FAD-dependent monooxygenase family. FAD is required as a cofactor.

It functions in the pathway secondary metabolite biosynthesis. In terms of biological role, FAD-dependent monooxygenase; part of the gene cluster that mediates the biosynthesis of neosartoricin B, a prenylated anthracenone that probably exhibits T-cell antiproliferative activity, suggestive of a physiological role as an immunosuppressive agent. The non-reducing polyketide synthase nscA probably synthesizes and cyclizes the decaketide backbone. The hydrolase nscB then mediates the product release through hydrolysis followed by spontaneous decarboxylation. The prenyltransferase nscD catalyzes the addition of the dimethylallyl group to the aromatic C5. The FAD-dependent monooxygenase nscC is then responsible for the stereospecific hydroxylation at C2. Neosartoricin B can be converted into two additional compounds neosartoricins C and D. Neosartoricin C is a spirocyclic compound that is cyclized through the attack of C3 hydroxyl on C14, followed by dehydration. On the other hand, neosartoricin D is a further cyclized compound in which attack of C2 on C14 in neosartoricin C results in the formation of the acetal-containing dioxabicyclo-octanone ring. Both of these compounds are novel and possibly represent related metabolites of the gene cluster. In Trichophyton rubrum (strain ATCC MYA-4607 / CBS 118892) (Athlete's foot fungus), this protein is FAD-dependent monooxygenase nscC.